The following is a 70-amino-acid chain: Exodeoxyribonuclease 7 small subunit (70 aa).

This sequence belongs to the XseB family. As to quaternary structure, heterooligomer composed of large and small subunits.

It localises to the cytoplasm. The enzyme catalyses Exonucleolytic cleavage in either 5'- to 3'- or 3'- to 5'-direction to yield nucleoside 5'-phosphates.. Functionally, bidirectionally degrades single-stranded DNA into large acid-insoluble oligonucleotides, which are then degraded further into small acid-soluble oligonucleotides. The protein is Exodeoxyribonuclease 7 small subunit of Streptococcus gordonii (strain Challis / ATCC 35105 / BCRC 15272 / CH1 / DL1 / V288).